The primary structure comprises 1375 residues: DNA-directed RNA polymerase subunit beta' (1375 aa).

Positions 1–158 are unknown; the sequence is MAKNEVLSLP…RVNKIIQPIR (158 aa). The interval 159–1353 is DNA-directed RNA polymerase subunit beta'; sequence KTYGSKAFTH…GGLIPAGTGI (1195 aa). Residues cysteine 219, cysteine 221, cysteine 233, and cysteine 236 each contribute to the Zn(2+) site. Mg(2+) contacts are provided by aspartate 607, aspartate 609, and aspartate 611.

Belongs to the RNA polymerase beta' chain family. In terms of assembly, the RNAP catalytic core consists of 2 alpha, 1 beta, 1 beta' and 1 omega subunit. When a sigma factor is associated with the core the holoenzyme is formed, which can initiate transcription. Requires Mg(2+) as cofactor. Zn(2+) is required as a cofactor.

It catalyses the reaction RNA(n) + a ribonucleoside 5'-triphosphate = RNA(n+1) + diphosphate. Its function is as follows. DNA-dependent RNA polymerase catalyzes the transcription of DNA into RNA using the four ribonucleoside triphosphates as substrates. This Acholeplasma laidlawii (strain PG-8A) protein is DNA-directed RNA polymerase subunit beta'.